The sequence spans 388 residues: N-acetylneuraminate epimerase (388 aa).

An N-terminal signal peptide occupies residues 1 to 26 (MFSLIGAKRQAIGIAALAWSTGAVMA). Kelch repeat units lie at residues 48–92 (MAYV…AAAG), 94–147 (KIFA…VGLA), 149–186 (GRIA…KLVD), 187–232 (SYMG…ATMG), 236–285 (FLLV…VAGA), 307–356 (ANAA…DAPG), and 358–387 (LLVV…LSVE).

Belongs to the NanM family. As to quaternary structure, homodimer.

It localises to the periplasm. The enzyme catalyses N-acetyl-alpha-neuraminate = N-acetyl-beta-neuraminate. Converts alpha-N-acetylneuranimic acid (Neu5Ac) to the beta-anomer, accelerating the equilibrium between the alpha- and beta-anomers. Probably facilitates sialidase-negative bacteria to compete successfully for limited amounts of extracellular Neu5Ac, which is likely taken up in the beta-anomer. In addition, the rapid removal of sialic acid from solution might be advantageous to the bacterium to damp down host responses. The chain is N-acetylneuraminate epimerase from Brucella suis (strain ATCC 23445 / NCTC 10510).